A 121-amino-acid chain; its full sequence is NAD(P)H-quinone oxidoreductase subunit 3, chloroplastic (121 aa).

3 consecutive transmembrane segments (helical) span residues 10-30, 65-85, and 90-110; these read FFIF…ISKF, MFAL…PWAM, and LGLS…IGLV.

This sequence belongs to the complex I subunit 3 family. NDH is composed of at least 16 different subunits, 5 of which are encoded in the nucleus.

Its subcellular location is the plastid. It localises to the chloroplast thylakoid membrane. It carries out the reaction a plastoquinone + NADH + (n+1) H(+)(in) = a plastoquinol + NAD(+) + n H(+)(out). It catalyses the reaction a plastoquinone + NADPH + (n+1) H(+)(in) = a plastoquinol + NADP(+) + n H(+)(out). NDH shuttles electrons from NAD(P)H:plastoquinone, via FMN and iron-sulfur (Fe-S) centers, to quinones in the photosynthetic chain and possibly in a chloroplast respiratory chain. The immediate electron acceptor for the enzyme in this species is believed to be plastoquinone. Couples the redox reaction to proton translocation, and thus conserves the redox energy in a proton gradient. The sequence is that of NAD(P)H-quinone oxidoreductase subunit 3, chloroplastic from Physcomitrium patens (Spreading-leaved earth moss).